A 346-amino-acid chain; its full sequence is Methylthioribose-1-phosphate isomerase (346 aa).

Residues 46 to 48 (RGA), Arg89, and Gln196 each bind substrate. The active-site Proton donor is Asp237. Residue 247–248 (NK) participates in substrate binding.

It belongs to the eIF-2B alpha/beta/delta subunits family. MtnA subfamily.

The enzyme catalyses 5-(methylsulfanyl)-alpha-D-ribose 1-phosphate = 5-(methylsulfanyl)-D-ribulose 1-phosphate. It functions in the pathway amino-acid biosynthesis; L-methionine biosynthesis via salvage pathway; L-methionine from S-methyl-5-thio-alpha-D-ribose 1-phosphate: step 1/6. In terms of biological role, catalyzes the interconversion of methylthioribose-1-phosphate (MTR-1-P) into methylthioribulose-1-phosphate (MTRu-1-P). This Geotalea daltonii (strain DSM 22248 / JCM 15807 / FRC-32) (Geobacter daltonii) protein is Methylthioribose-1-phosphate isomerase.